A 146-amino-acid chain; its full sequence is Ribonuclease P protein component (146 aa).

Belongs to the RnpA family. Consists of a catalytic RNA component (M1 or rnpB) and a protein subunit.

The enzyme catalyses Endonucleolytic cleavage of RNA, removing 5'-extranucleotides from tRNA precursor.. In terms of biological role, RNaseP catalyzes the removal of the 5'-leader sequence from pre-tRNA to produce the mature 5'-terminus. It can also cleave other RNA substrates such as 4.5S RNA. The protein component plays an auxiliary but essential role in vivo by binding to the 5'-leader sequence and broadening the substrate specificity of the ribozyme. The polypeptide is Ribonuclease P protein component (Helicobacter hepaticus (strain ATCC 51449 / 3B1)).